A 65-amino-acid chain; its full sequence is Large ribosomal subunit protein bL35 (65 aa).

The protein belongs to the bacterial ribosomal protein bL35 family.

In Aliarcobacter butzleri (strain RM4018) (Arcobacter butzleri), this protein is Large ribosomal subunit protein bL35.